Consider the following 114-residue polypeptide: MASSRRGLLLLLMLLTAHPGPSEAQHWSHGWYPGGKRALSSAQDPQNALRPPAGSPAQATYGLPSDALAHLEDSMPWEGRTMAWWSLRRKRYLAQTLLTAAREPRPVPPSSNKV.

A signal peptide spans 1-24 (MASSRRGLLLLLMLLTAHPGPSEA). Gly34 bears the Glycine amide mark. Positions 35–59 (GKRALSSAQDPQNALRPPAGSPAQA) are disordered.

The protein belongs to the GnRH family.

It localises to the secreted. Stimulates the secretion of gonadotropins; it stimulates the secretion of both luteinizing and follicle-stimulating hormones. In Macaca mulatta (Rhesus macaque), this protein is Progonadoliberin-2 (GNRH2).